The following is a 508-amino-acid chain: Histidine ammonia-lyase (508 aa).

Positions 143–145 (ASG) form a cross-link, 5-imidazolinone (Ala-Gly). Position 144 is a 2,3-didehydroalanine (Ser) (S144).

It belongs to the PAL/histidase family. In terms of processing, contains an active site 4-methylidene-imidazol-5-one (MIO), which is formed autocatalytically by cyclization and dehydration of residues Ala-Ser-Gly.

The protein localises to the cytoplasm. The enzyme catalyses L-histidine = trans-urocanate + NH4(+). It functions in the pathway amino-acid degradation; L-histidine degradation into L-glutamate; N-formimidoyl-L-glutamate from L-histidine: step 1/3. The chain is Histidine ammonia-lyase from Anaeromyxobacter sp. (strain K).